A 118-amino-acid polypeptide reads, in one-letter code: Class II hydrophobin CRP (118 aa).

Residues 1–22 form the signal peptide; it reads MQFSIIAISFLASLAMASPAKR. Residues 20–46 form a disordered region; that stretch reads AKRGGGGGGSGSGSGSGSGSGSGGGST. The segment covering 22-45 has biased composition (gly residues); sequence RGGGGGGSGSGSGSGSGSGSGGGS. Repeat copies occupy residues 29-30, 31-32, 33-34, 35-36, 37-38, 39-40, and 41-42. A 7 X 2 AA tandem repeats of S-G region spans residues 29–42; sequence SGSGSGSGSGSGSG. Intrachain disulfides connect cysteine 51–cysteine 100, cysteine 61–cysteine 91, cysteine 62–cysteine 74, and cysteine 101–cysteine 112.

This sequence belongs to the cerato-ulmin hydrophobin family. In terms of assembly, homotetramer. Further self-assembles to form highly ordered films at water-air interfaces through intermolecular interactions.

The protein resides in the secreted. It localises to the cell wall. In terms of biological role, aerial growth, conidiation, and dispersal of filamentous fungi in the environment rely upon a capability of their secreting small amphipathic proteins called hydrophobins (HPBs) with low sequence identity. Class I can self-assemble into an outermost layer of rodlet bundles on aerial cell surfaces, conferring cellular hydrophobicity that supports fungal growth, development and dispersal; whereas Class II form highly ordered films at water-air interfaces through intermolecular interactions but contribute nothing to the rodlet structure. Cryparin is a class II hydrophobin that is the most abundant protein produced by this fungus when grown in liquid culture and that plays an essential role in the fitness of this important plant pathogen by facilitating the eruption of the fungal fruiting bodies through the bark of its host tree. The chain is Class II hydrophobin CRP from Cryphonectria parasitica (Chestnut blight fungus).